A 2115-amino-acid polypeptide reads, in one-letter code: Non-reducing polyketide synthase PFUR17_0229 (2115 aa).

The tract at residues 8 to 246 (VLFGDQTVDP…ISLPITAAFH (239 aa)) is N-terminal acylcarrier protein transacylase (SAT) domain (SAT). The region spanning 367-796 (SGDIAIVGVA…GGNTSLVLED (430 aa)) is the Ketosynthase family 3 (KS3) domain. Active-site for beta-ketoacyl synthase activity residues include C539, H674, and H713. Residues 895–1218 (IFAFTGQGAQ…SISNAYNSGA (324 aa)) form a malonyl-CoA:ACP transacylase (MAT) domain region. The interval 1279 to 1592 (TTCLQKVESE…KRNILQSLLS (314 aa)) is product template (PT) domain. An N-terminal hotdog fold region spans residues 1282 to 1413 (LQKVESETFT…CTVMYGDGQQ (132 aa)). Residues 1282 to 1588 (LQKVESETFT…FQKMKRNILQ (307 aa)) form the PKS/mFAS DH domain. H1315 acts as the Proton acceptor; for dehydratase activity in catalysis. The interval 1441-1588 (VHRLLKEMIY…FQKMKRNILQ (148 aa)) is C-terminal hotdog fold. Catalysis depends on D1501, which acts as the Proton donor; for dehydratase activity. Residues 1594 to 1613 (GHEETPPARPVPSKRTVQGS) form a disordered region. The 78-residue stretch at 1626–1703 (KAASGGFSNI…QLRNFFLDKV (78 aa)) folds into the Carrier 1 domain. Residue S1663 is modified to O-(pantetheine 4'-phosphoryl)serine. Residues 1710 to 1742 (FDDEESEMSSSTAGSTPGSSTSHGNQNTTVTTP) form a disordered region. Residues 1718–1733 (SSSTAGSTPGSSTSHG) are compositionally biased toward low complexity. In terms of domain architecture, Carrier 2 spans 1742 to 1819 (PAEPDVVAIL…DVQKALGVPS (78 aa)). At S1779 the chain carries O-(pantetheine 4'-phosphoryl)serine. A thioesterase (TE) domain region spans residues 1861–2097 (LFLLPDGAGS…VVGGNHFSIM (237 aa)).

It depends on pantetheine 4'-phosphate as a cofactor.

The enzyme catalyses 6 malonyl-CoA + 2 acetyl-CoA + 5 H(+) = o-orsellinate depside + 6 CO2 + 8 CoA + H2O. Its function is as follows. Non-reducing polyketide synthase; part of a gene cluster that mediates the biosynthesis of a yet unidentified depside/depsidone compound. The first step in the pathway is performed by the PKS PFUR17_0229 that condenses 2 acetyl-CoA starter units with 6 malonyl-CoA units to produce lecanoric acid (LA), also known as orsellinate depside. The biosynthesis occurs via the formation of 2 orsellinate intermediates fused together by the C-terminal thioesterase (TE) domain that finally releases lecanoric acid. In addition to the PKS gene, the PFUR17 gene cluster contains closely linked genes encoding a cytochrome P-450 and a laccase (phenol oxidase), directly upstream and downstream respectively, so it is likely that lecanoric acid is an intermediate in a longer biosynthetic pathway. This is Non-reducing polyketide synthase PFUR17_0229 from Pseudevernia furfuracea (Tree moss).